The primary structure comprises 627 residues: MALARDAKLESDTLQVLQDVANRLRIHSIRATCACSSGHPTSCCSVAEIMAVLFFHTMRYKQADPEHPDNDRFVLSKGHAAPILYAVWVEVGRICESDLLNLRKIHCDLEGHPTPRLSFVDVATGSLGQGLGAACGMAYTGKYFDKASYRVFCLMGDGESSEGSVWEALAFASHYNLDNLVAIFDVNRLGQSGTAPLEHCTAVYEKRCQAFGWNTYVVDGHDVEALCQAFWKAAQVKNKPTALIAKTFKGRGIPNVEDAENWHGKPMPKDRADGIVKLIENRIQTNRNLTPKPPIEDSPRISMSNTKMTSLPVYKLGDMIATREAYGLALAKLGQSNQRVIVLDGDTKNSTFSEVFKKEHPERFIECFIAEQNMVSVALGCATRGRTIAFVSTFAAFLTRAFDQIRMGAISQTNINFVGSHCGVSVGEDGPSQMALEDLAMFRSIPNCTVFYPSDAVSTEHAVYLAANTKGMCFIRTTRPKTAVIYTAEENFVIGQAKVIRQSAVDKVTVIGAGVTLHEALVAAEELSQQGIFIRVIDLFTIKPLDAVTIIQSAKATGGQIITVEDHYREGGIGEAVCAAISREPDIVVRQLAVTEVPRSGKPSELLDMFGISARHIIAAVKDTVMK.

Histidine 39 serves as a coordination point for substrate. Thiamine diphosphate contacts are provided by residues serine 42, histidine 79, and 125-127 (GSL). Aspartate 157 provides a ligand contact to Mg(2+). Positions 158 and 187 each coordinate thiamine diphosphate. Positions 187 and 189 each coordinate Mg(2+). Lysine 249 and histidine 263 together coordinate thiamine diphosphate. Histidine 263, arginine 323, and serine 350 together coordinate substrate. The thiamine diphosphate site is built by glutamate 371 and phenylalanine 397. The active-site Proton donor is the glutamate 371. Histidine 421 and aspartate 429 together coordinate substrate. Residue glutamine 433 coordinates thiamine diphosphate. Residue arginine 479 participates in substrate binding.

Belongs to the transketolase family. As to quaternary structure, homodimer. The cofactor is Mg(2+). Requires Ca(2+) as cofactor. It depends on Mn(2+) as a cofactor. Co(2+) serves as cofactor. Thiamine diphosphate is required as a cofactor.

It carries out the reaction D-sedoheptulose 7-phosphate + D-glyceraldehyde 3-phosphate = aldehydo-D-ribose 5-phosphate + D-xylulose 5-phosphate. Functionally, plays an essential role in total transketolase activity and cell proliferation in cancer cells; after transfection with anti-TKTL1 siRNA, total transketolase activity dramatically decreases and proliferation was significantly inhibited in cancer cells. Plays a pivotal role in carcinogenesis. In Mus musculus (Mouse), this protein is Transketolase-like protein 2 (Tktl2).